The chain runs to 309 residues: MKIVFMGTPDIAVPCLQKIIDENYEILGVVTQPDKPKGRGKKLGMSPVKELAIENNIPVYQPVKARDKEFIDKIKSLNPDVIVVVAFGQILPKEILEIPKLGCINVHVSLLPKYRGAAPINWVIINGEEKTGVTTMYMDEGLDTGDMILKTEVNLDENITAGELHDKMMNIGAETLKETLRLIEEGNAPREVQNHEEFSYAPIMNKSLGNIDFSKSAREIHNLVRGVNPWPSAYTTYNDVIMKVWKTKVLDEKSTKDVGTIIDVSKDGIKVSTIDNVLLIEEIQMPNKKRMLVGEYIKGNTIETGLVLG.

109 to 112 is a binding site for (6S)-5,6,7,8-tetrahydrofolate; that stretch reads SLLP.

The protein belongs to the Fmt family.

It carries out the reaction L-methionyl-tRNA(fMet) + (6R)-10-formyltetrahydrofolate = N-formyl-L-methionyl-tRNA(fMet) + (6S)-5,6,7,8-tetrahydrofolate + H(+). Functionally, attaches a formyl group to the free amino group of methionyl-tRNA(fMet). The formyl group appears to play a dual role in the initiator identity of N-formylmethionyl-tRNA by promoting its recognition by IF2 and preventing the misappropriation of this tRNA by the elongation apparatus. The sequence is that of Methionyl-tRNA formyltransferase from Clostridioides difficile (strain 630) (Peptoclostridium difficile).